Here is a 312-residue protein sequence, read N- to C-terminus: Polyamine aminopropyltransferase (312 aa).

Positions 7–247 (FFWAQEYFTP…GPLGFALAAQ (241 aa)) constitute a PABS domain. Q36 is an S-methyl-5'-thioadenosine binding site. Spermidine-binding residues include H67 and E95. S-methyl-5'-thioadenosine-binding positions include D115 and 147–148 (DA). D165 acts as the Proton acceptor in catalysis. Residue P174 coordinates S-methyl-5'-thioadenosine.

This sequence belongs to the spermidine/spermine synthase family. As to quaternary structure, homodimer or homotetramer.

The protein resides in the cytoplasm. The enzyme catalyses S-adenosyl 3-(methylsulfanyl)propylamine + putrescine = S-methyl-5'-thioadenosine + spermidine + H(+). The protein operates within amine and polyamine biosynthesis; spermidine biosynthesis; spermidine from putrescine: step 1/1. In terms of biological role, catalyzes the irreversible transfer of a propylamine group from the amino donor S-adenosylmethioninamine (decarboxy-AdoMet) to putrescine (1,4-diaminobutane) to yield spermidine. The sequence is that of Polyamine aminopropyltransferase from Synechococcus sp. (strain JA-3-3Ab) (Cyanobacteria bacterium Yellowstone A-Prime).